Consider the following 129-residue polypeptide: Small ribosomal subunit protein eS8 (129 aa).

The tract at residues 1 to 29 (MSVWQGRSRRKPTGGLYRPARKKRKYEMG) is disordered.

This sequence belongs to the eukaryotic ribosomal protein eS8 family. In terms of assembly, part of the 30S ribosomal subunit.

The polypeptide is Small ribosomal subunit protein eS8 (rps8e) (Methanocaldococcus jannaschii (strain ATCC 43067 / DSM 2661 / JAL-1 / JCM 10045 / NBRC 100440) (Methanococcus jannaschii)).